Here is a 121-residue protein sequence, read N- to C-terminus: Large ribosomal subunit protein uL14c (121 aa).

Belongs to the universal ribosomal protein uL14 family. Part of the 50S ribosomal subunit.

The protein localises to the plastid. It is found in the chloroplast. Functionally, binds to 23S rRNA. In Thalassiosira pseudonana (Marine diatom), this protein is Large ribosomal subunit protein uL14c.